We begin with the raw amino-acid sequence, 130 residues long: Small ribosomal subunit protein uS9 (130 aa).

It belongs to the universal ribosomal protein uS9 family.

The protein is Small ribosomal subunit protein uS9 of Ralstonia nicotianae (strain ATCC BAA-1114 / GMI1000) (Ralstonia solanacearum).